A 108-amino-acid polypeptide reads, in one-letter code: Heme oxygenase (staphylobilin-producing) (108 aa).

Positions 2–93 constitute an ABM domain; the sequence is FMAENRLQLQ…DDDGQQSPIL (92 aa). A Fe cation-binding site is contributed by Asn-6. Residues 21–28 and His-76 each bind heme; that span reads RFYNRQGI.

Belongs to the antibiotic biosynthesis monooxygenase family. Heme-degrading monooxygenase IsdG subfamily. Homodimer.

The protein resides in the cytoplasm. The enzyme catalyses heme b + 5 AH2 + 4 O2 + 2 H(+) = delta-staphylobilin + Fe(2+) + formaldehyde + 5 A + 4 H2O. It catalyses the reaction heme b + 5 AH2 + 4 O2 + 2 H(+) = beta-staphylobilin + Fe(2+) + formaldehyde + 5 A + 4 H2O. In terms of biological role, allows bacterial pathogens to use the host heme as an iron source. Catalyzes the oxidative degradation of the heme macrocyclic porphyrin ring to the oxo-bilirubin chromophore staphylobilin (a mixture of the linear tetrapyrroles 5-oxo-delta-bilirubin and 15-oxo-beta-bilirubin) in the presence of a suitable electron donor such as ascorbate or NADPH--cytochrome P450 reductase, with subsequent release of free iron. The sequence is that of Heme oxygenase (staphylobilin-producing) (isdI) from Staphylococcus aureus (strain Mu3 / ATCC 700698).